We begin with the raw amino-acid sequence, 448 residues long: Phosphoglucosamine mutase (448 aa).

The active-site Phosphoserine intermediate is the Ser89. Ser89, Asp232, Asp234, and Asp236 together coordinate Mg(2+). Ser89 is subject to Phosphoserine.

It belongs to the phosphohexose mutase family. Forms large aggregates. Mg(2+) is required as a cofactor. Activated by phosphorylation.

It carries out the reaction alpha-D-glucosamine 1-phosphate = D-glucosamine 6-phosphate. Its function is as follows. Catalyzes the conversion of glucosamine-6-phosphate to glucosamine-1-phosphate. The polypeptide is Phosphoglucosamine mutase (glmM) (Methanocaldococcus jannaschii (strain ATCC 43067 / DSM 2661 / JAL-1 / JCM 10045 / NBRC 100440) (Methanococcus jannaschii)).